A 37-amino-acid polypeptide reads, in one-letter code: Large ribosomal subunit protein bL36A (37 aa).

Belongs to the bacterial ribosomal protein bL36 family.

In Methylobacillus flagellatus (strain ATCC 51484 / DSM 6875 / VKM B-1610 / KT), this protein is Large ribosomal subunit protein bL36A.